The following is a 708-amino-acid chain: Protein psiF (708 aa).

The signal sequence occupies residues 1-19 (MKYLFIAIILILYCSFTKA). Residues 20–643 (DQKKFLVNMY…QSTAVKVGVG (624 aa)) are Extracellular-facing. N-linked (GlcNAc...) asparagine glycans are attached at residues Asn-78, Asn-116, Asn-222, Asn-317, Asn-318, Asn-371, Asn-498, and Asn-600. In terms of domain architecture, PA14 spans 103-263 (TQTAGSQNYY…YDYCGICNGK (161 aa)). The chain crosses the membrane as a helical span at residues 644–664 (IGAAAAAGIAIGGAVAAGLAI). Residues 665–708 (FGGKKAYDTWKTSRGNVMTGSQSNPLYTQNQNNGNNPLYSAPAE) are Cytoplasmic-facing. Over residues 682 to 702 (MTGSQSNPLYTQNQNNGNNPL) the composition is skewed to polar residues. The interval 682–708 (MTGSQSNPLYTQNQNNGNNPLYSAPAE) is disordered.

Belongs to the prespore-cell-inducing factor family. Forms a complex with dicB.

It localises to the membrane. The protein resides in the secreted. In terms of biological role, acts as a quorum sensing protein regulating discoidin gene expression during growth and development. D.discoideum is a single-celled amoebae and switches to multicellular development when food becomes limited. As the growing cells reach a high density, they begin expressing discoidin genes. The ability of psiF/dicA to induce discoidin gene expression when present in conditioned medium, suggests that it allows cells to sense their local density. This is Protein psiF (psiF) from Dictyostelium discoideum (Social amoeba).